Here is a 266-residue protein sequence, read N- to C-terminus: MNKPIGVIDSGVGGLTVAKEIMRQLPNETIYYLGDIGRCPYGPRPGEQVKQYTVEIARKLMGFDIKMLVIACNTATAVALEYLQKTLSIPVIGVIEPGARTAIMTTRNQNVLVLGTEGTIKSEAYRTHIKRINPHVEVHGVACPGFVPLVEQMRYSDPTITSIVIHQTLKRWRNSESDTVILGCTHYPLLYKPIYDYFGGKKTVISSGLETAREVSALLTFSNEHASYTEHPDHRFFATGDTTHITNIIKEWLNLSVNVERISVND.

Substrate is bound by residues 9 to 10 (DS) and 41 to 42 (YG). The Proton donor/acceptor role is filled by cysteine 72. 73 to 74 (NT) lines the substrate pocket. The active-site Proton donor/acceptor is cysteine 184. 185 to 186 (TH) contacts substrate.

It belongs to the aspartate/glutamate racemases family.

The enzyme catalyses L-glutamate = D-glutamate. It participates in cell wall biogenesis; peptidoglycan biosynthesis. Functionally, provides the (R)-glutamate required for cell wall biosynthesis. This chain is Glutamate racemase, found in Staphylococcus aureus (strain bovine RF122 / ET3-1).